The primary structure comprises 268 residues: Glucosamine-6-phosphate deaminase (268 aa).

Asp67 (proton acceptor; for enolization step) is an active-site residue. Residue Asn137 is the For ring-opening step of the active site. The Proton acceptor; for ring-opening step role is filled by His139. Glu144 functions as the For ring-opening step in the catalytic mechanism.

It belongs to the glucosamine/galactosamine-6-phosphate isomerase family. NagB subfamily. Homohexamer.

It catalyses the reaction alpha-D-glucosamine 6-phosphate + H2O = beta-D-fructose 6-phosphate + NH4(+). It functions in the pathway amino-sugar metabolism; N-acetylneuraminate degradation; D-fructose 6-phosphate from N-acetylneuraminate: step 5/5. In terms of biological role, catalyzes the reversible isomerization-deamination of glucosamine 6-phosphate (GlcN6P) to form fructose 6-phosphate (Fru6P) and ammonium ion. The chain is Glucosamine-6-phosphate deaminase from Pseudoalteromonas translucida (strain TAC 125).